The following is a 191-amino-acid chain: MKYIQTDQILDIPEGVTVDIKARVVKVTGPRGELTKDLKHIDVTFNKINNRAIKITVHNGDRKHVAALRTVKSLIANLITGVTKGYKYKMRFVYAHFPINVNIIKKDGQDYVEIRNFLGEKRVREVKIHEGVTMEISSTQKDELIVSGNSLEAVSQNAADIQQICRVRNKDIRKFLDGIYVSERGTIVEEI.

It belongs to the universal ribosomal protein uL6 family. As to quaternary structure, component of the large ribosomal subunit. Mature ribosomes consist of a small (40S) and a large (60S) subunit. The 40S subunit contains about 32 different proteins and 1 molecule of RNA (18S). The 60S subunit contains 45 different proteins and 3 molecules of RNA (25S, 5.8S and 5S).

The protein localises to the cytoplasm. In terms of biological role, component of the ribosome, a large ribonucleoprotein complex responsible for the synthesis of proteins in the cell. The small ribosomal subunit (SSU) binds messenger RNAs (mRNAs) and translates the encoded message by selecting cognate aminoacyl-transfer RNA (tRNA) molecules. The large subunit (LSU) contains the ribosomal catalytic site termed the peptidyl transferase center (PTC), which catalyzes the formation of peptide bonds, thereby polymerizing the amino acids delivered by tRNAs into a polypeptide chain. The nascent polypeptides leave the ribosome through a tunnel in the LSU and interact with protein factors that function in enzymatic processing, targeting, and the membrane insertion of nascent chains at the exit of the ribosomal tunnel. In Candida albicans (strain SC5314 / ATCC MYA-2876) (Yeast), this protein is Large ribosomal subunit protein uL6.